The sequence spans 146 residues: NADH-quinone oxidoreductase subunit A (146 aa).

A run of 3 helical transmembrane segments spans residues 14 to 34, 68 to 88, and 96 to 116; these read FALF…GGFL, LVAM…AWAV, and IGFI…IYLV.

The protein belongs to the complex I subunit 3 family. As to quaternary structure, NDH-1 is composed of 13 different subunits. Subunits NuoA, H, J, K, L, M, N constitute the membrane sector of the complex.

It localises to the cell inner membrane. It carries out the reaction a quinone + NADH + 5 H(+)(in) = a quinol + NAD(+) + 4 H(+)(out). In terms of biological role, NDH-1 shuttles electrons from NADH, via FMN and iron-sulfur (Fe-S) centers, to quinones in the respiratory chain. The immediate electron acceptor for the enzyme in this species is believed to be ubiquinone. Couples the redox reaction to proton translocation (for every two electrons transferred, four hydrogen ions are translocated across the cytoplasmic membrane), and thus conserves the redox energy in a proton gradient. This Pectobacterium atrosepticum (strain SCRI 1043 / ATCC BAA-672) (Erwinia carotovora subsp. atroseptica) protein is NADH-quinone oxidoreductase subunit A.